The chain runs to 130 residues: Keratin-associated protein 12-1 (130 aa).

A run of 14 repeats spans residues 10-14 (CQPSC), 15-29 (CVSSSCQPSCCVSSP), 34-38 (CFVSS), 40-44 (CQPSC), 45-49 (CVSSS), 60-64 (CIPVR), 85-89 (CQSSV), 90-94 (CVPVS), 95-99 (CRPVC), 104-108 (CQSSG), 109-113 (CCQPS), 114-118 (CPTLV), 119-123 (CKPVT), and 124-128 (CSNPS). Residues 10–128 (CQPSCCVSSS…CKPVTCSNPS (119 aa)) are 14 X 5 AA approximate repeats.

The protein belongs to the KRTAP type 12 family. As to quaternary structure, interacts with hair keratins. Expressed only in the head and back skin of a 3 day old mouse. Not expressed in adult skin.

Functionally, in the hair cortex, hair keratin intermediate filaments are embedded in an interfilamentous matrix, consisting of hair keratin-associated proteins (KRTAP), which are essential for the formation of a rigid and resistant hair shaft through their extensive disulfide bond cross-linking with abundant cysteine residues of hair keratins. The matrix proteins include the high-sulfur and high-glycine-tyrosine keratins. This Mus musculus (Mouse) protein is Keratin-associated protein 12-1.